A 117-amino-acid chain; its full sequence is Ribosome-binding factor A (117 aa).

Belongs to the RbfA family. In terms of assembly, monomer. Binds 30S ribosomal subunits, but not 50S ribosomal subunits or 70S ribosomes.

The protein localises to the cytoplasm. One of several proteins that assist in the late maturation steps of the functional core of the 30S ribosomal subunit. Associates with free 30S ribosomal subunits (but not with 30S subunits that are part of 70S ribosomes or polysomes). Required for efficient processing of 16S rRNA. May interact with the 5'-terminal helix region of 16S rRNA. The chain is Ribosome-binding factor A from Leptospira interrogans serogroup Icterohaemorrhagiae serovar copenhageni (strain Fiocruz L1-130).